The following is a 385-amino-acid chain: Galactokinase (385 aa).

34 to 37 (EHTD) contributes to the substrate binding site. Position 124-130 (124-130 (SSGLSSS)) interacts with ATP. The Mg(2+) site is built by Ser130 and Glu162. The active-site Proton acceptor is Asp174. Tyr223 serves as a coordination point for substrate.

It belongs to the GHMP kinase family. GalK subfamily.

The protein resides in the cytoplasm. It carries out the reaction alpha-D-galactose + ATP = alpha-D-galactose 1-phosphate + ADP + H(+). It functions in the pathway carbohydrate metabolism; galactose metabolism. In terms of biological role, catalyzes the transfer of the gamma-phosphate of ATP to D-galactose to form alpha-D-galactose-1-phosphate (Gal-1-P). This chain is Galactokinase, found in Mannheimia succiniciproducens (strain KCTC 0769BP / MBEL55E).